Here is an 854-residue protein sequence, read N- to C-terminus: SH2 domain-containing protein 3C (854 aa).

Ser-22 bears the Phosphoserine mark. Residues 34-43 (RSSASASIRS) are compositionally biased toward low complexity. Positions 34–129 (RSSASASIRS…AKEAGEGTEA (96 aa)) are disordered. A compositionally biased stretch (basic and acidic residues) spans 99-124 (EVSRESHLVSRRLPEPPDLEAAKEAG). The SH2 domain occupies 215-314 (WYHGRIPREV…QSGAIIYCPV (100 aa)). A phosphotyrosine mark is found at Tyr-273 and Tyr-278. 3 disordered regions span residues 330-384 (SQGS…PRDS), 398-417 (LHSP…YSTV), and 422-520 (APSA…ERQK). Residues 333–347 (SSKTASPASPSGSKG) are compositionally biased toward low complexity. Ser-354 is subject to Phosphoserine. 3 stretches are compositionally biased toward low complexity: residues 400 to 415 (SPLS…PAYS), 422 to 436 (APSA…PASP), and 474 to 485 (SPSPSLSSYSDP). Ser-435 carries the phosphoserine modification. Over residues 508–520 (TPRKARGSGERQK) the composition is skewed to basic and acidic residues. Residues 580 to 848 (DARTLARHVT…TALSHKLEPA (269 aa)) enclose the Ras-GEF domain. At Tyr-787 the chain carries Phosphotyrosine.

In terms of assembly, component of a complex comprised of SH2D3C, BCAR1/CAS, and CRK. Within the complex, interacts with CRK and (via C-terminus) with BCAR1/CAS (via C-terminus). Interacts with NEDD9/HEF1. Interacts with EPHB2. Interacts with NEDD9/HEF1. Interacts with BCAR1/CAS. Interacts with PTK2B. As to quaternary structure, interacts (via C-terminus) with BCAR1/CAS (via C-terminus). Interacts with IGF1. Post-translationally, phosphorylated by MAPK/ERK upon T-cell receptor stimulation in T-cells. In terms of tissue distribution, expressed in the olfactory bulb and olfactory sensory neurons (at protein level). Expressed in B cells (at protein level). Expressed in T lymphocytes. As to expression, expressed in hematopoietic cells from spleen, lymph node and thymus (at protein level). Expressed weakly in the lung (at protein level). Expressed in the brain, lung, kidney, and weakly expressed in the liver and lung (at protein level).

The protein resides in the cytoplasm. The protein localises to the cell membrane. Its subcellular location is the cell projection. It is found in the axon. It localises to the ruffle membrane. Its function is as follows. Acts as an adapter protein that mediates cell signaling pathways involved in cellular functions such as cell adhesion and migration, tissue organization, and the regulation of the immune response. Plays a role in integrin-mediated cell adhesion through BCAR1-CRK-RAPGEF1 signaling and activation of the small GTPase RAP1. Promotes cell migration and invasion through the extracellular matrix. Required for marginal zone B-cell development and thymus-independent type 2 immune responses. Mediates migration and adhesion of B cells in the splenic marginal zone via promoting hyperphosphorylation of NEDD9/CASL. Plays a role in CXCL13-induced chemotaxis of B-cells. Plays a role in the migration of olfactory sensory neurons (OSNs) into the forebrain and the innervation of the olfactory bulb by the OSN axons during development. Required for the efficient tyrosine phosphorylation of BCAR1 in OSN axons. Important regulator of chemokine-induced, integrin-mediated T lymphocyte adhesion and migration, acting upstream of RAP1. Required for tissue-specific adhesion of T lymphocytes to peripheral tissues. Required for basal and CXCL2 stimulated serine-threonine phosphorylation of NEDD9. May be involved in the regulation of T-cell receptor-mediated IL2 production through the activation of the JNK pathway in T-cells. Functionally, may be involved in the BCAR1/CAS-mediated JNK activation pathway. In Mus musculus (Mouse), this protein is SH2 domain-containing protein 3C (Sh2d3c).